The sequence spans 365 residues: Anhydro-N-acetylmuramic acid kinase (365 aa).

Position 9 to 16 (Gly9 to Asp16) interacts with ATP.

This sequence belongs to the anhydro-N-acetylmuramic acid kinase family.

It catalyses the reaction 1,6-anhydro-N-acetyl-beta-muramate + ATP + H2O = N-acetyl-D-muramate 6-phosphate + ADP + H(+). Its pathway is amino-sugar metabolism; 1,6-anhydro-N-acetylmuramate degradation. It functions in the pathway cell wall biogenesis; peptidoglycan recycling. Its function is as follows. Catalyzes the specific phosphorylation of 1,6-anhydro-N-acetylmuramic acid (anhMurNAc) with the simultaneous cleavage of the 1,6-anhydro ring, generating MurNAc-6-P. Is required for the utilization of anhMurNAc either imported from the medium or derived from its own cell wall murein, and thus plays a role in cell wall recycling. This is Anhydro-N-acetylmuramic acid kinase from Rhodopseudomonas palustris (strain BisB18).